Here is a 264-residue protein sequence, read N- to C-terminus: 3-methyl-2-oxobutanoate hydroxymethyltransferase (264 aa).

The Mg(2+) site is built by aspartate 45 and aspartate 84. 3-methyl-2-oxobutanoate contacts are provided by residues 45 to 46, aspartate 84, and lysine 112; that span reads DS. Glutamate 114 contacts Mg(2+). The Proton acceptor role is filled by glutamate 181.

This sequence belongs to the PanB family. Homodecamer; pentamer of dimers. The cofactor is Mg(2+).

It localises to the cytoplasm. The catalysed reaction is 3-methyl-2-oxobutanoate + (6R)-5,10-methylene-5,6,7,8-tetrahydrofolate + H2O = 2-dehydropantoate + (6S)-5,6,7,8-tetrahydrofolate. It functions in the pathway cofactor biosynthesis; (R)-pantothenate biosynthesis; (R)-pantoate from 3-methyl-2-oxobutanoate: step 1/2. In terms of biological role, catalyzes the reversible reaction in which hydroxymethyl group from 5,10-methylenetetrahydrofolate is transferred onto alpha-ketoisovalerate to form ketopantoate. The chain is 3-methyl-2-oxobutanoate hydroxymethyltransferase from Shewanella oneidensis (strain ATCC 700550 / JCM 31522 / CIP 106686 / LMG 19005 / NCIMB 14063 / MR-1).